We begin with the raw amino-acid sequence, 163 residues long: I-Kappa-B like protein N3 (163 aa).

ANK repeat units follow at residues 62-95 (LGDTCIHVAALANRGKQAIQLIEKLVEYGANLNT) and 100-130 (NGDTVLDIAVKNKDHELTVWLWKQPSINLQT).

This sequence belongs to the polydnaviridae I-Kappa-B like protein family.

In terms of biological role, suppresses the host immune response through NF-kappa-B inactivation. Possesses ankyrin repeat domains required for NF-kappa-B binding but lacks the regulatory regions required for dissociation from NF-kappa-B and degradation. Therefore, prevents host NF-kappa-B release and subsequent activation. The chain is I-Kappa-B like protein N3 (N6) from Microplitis demolitor (Parasitoid wasp).